The sequence spans 246 residues: MGYRIEMATRNPFDIDHKSKYLREAALEANLSHPETTPTMLTCPIDSGFLKDPVITPEGFVYNKSSILKWLETKKEDPQSRKPLTAKDLQPFPELLIIVNRFVETQTNYEKLKNRLVQNARVAARQKEYTEIPDIFLCPISKTLIKTPVITAQGKVYDQEALSNFLIATGNKDETGKKLSIDDVVVFDELYQQIKVYNFYRKREMQKNQIQPSVSSGFGFFSLNFLTSWLWGTEEKKEKTSSDMTY.

U-box domains follow at residues threonine 36–tyrosine 109 and glutamate 131–glutamate 204.

Interacts with host CLK1. Post-translationally, ubiquitinated in the presence of host E1 ubiquitin-activating enzyme, E2 ubiquitin-conjugating enzyme (UBE2D1 or UBE2D3) and ubiquitin.

The protein localises to the secreted. Its subcellular location is the host cell. It carries out the reaction S-ubiquitinyl-[E2 ubiquitin-conjugating enzyme]-L-cysteine + [acceptor protein]-L-lysine = [E2 ubiquitin-conjugating enzyme]-L-cysteine + N(6)-ubiquitinyl-[acceptor protein]-L-lysine.. Effector proteins function to alter host cell physiology and promote bacterial survival in host tissues. This protein is an E3 ubiquitin ligase that interferes with host's ubiquitination pathway. Acts in conjunction with host E2 ubiquitin-conjugating enzymes UBE2D1 (UBCH5A) or UBE2D3 (UBCH5C), and mediates polyubiquitination of host kinase CLK1. This is E3 ubiquitin-protein ligase LubX (lubX) from Legionella pneumophila subsp. pneumophila (strain Philadelphia 1 / ATCC 33152 / DSM 7513).